We begin with the raw amino-acid sequence, 93 residues long: Large ribosomal subunit protein uL23 (93 aa).

The protein belongs to the universal ribosomal protein uL23 family. In terms of assembly, part of the 50S ribosomal subunit. Contacts protein L29, and trigger factor when it is bound to the ribosome.

One of the early assembly proteins it binds 23S rRNA. One of the proteins that surrounds the polypeptide exit tunnel on the outside of the ribosome. Forms the main docking site for trigger factor binding to the ribosome. In Campylobacter jejuni subsp. doylei (strain ATCC BAA-1458 / RM4099 / 269.97), this protein is Large ribosomal subunit protein uL23.